The chain runs to 242 residues: Probable septum site-determining protein MinC (242 aa).

Basic and acidic residues predominate over residues 120-135; sequence APKKVEEKPAEPEHKP. The interval 120–144 is disordered; the sequence is APKKVEEKPAEPEHKPSRIVTSPVR.

This sequence belongs to the MinC family. Interacts with MinD and FtsZ.

In terms of biological role, cell division inhibitor that blocks the formation of polar Z ring septums. Rapidly oscillates between the poles of the cell to destabilize FtsZ filaments that have formed before they mature into polar Z rings. Prevents FtsZ polymerization. This Ectopseudomonas mendocina (strain ymp) (Pseudomonas mendocina) protein is Probable septum site-determining protein MinC.